The sequence spans 251 residues: Imidazole glycerol phosphate synthase subunit HisF (251 aa).

Catalysis depends on residues D11 and D130.

This sequence belongs to the HisA/HisF family. As to quaternary structure, heterodimer of HisH and HisF.

Its subcellular location is the cytoplasm. It catalyses the reaction 5-[(5-phospho-1-deoxy-D-ribulos-1-ylimino)methylamino]-1-(5-phospho-beta-D-ribosyl)imidazole-4-carboxamide + L-glutamine = D-erythro-1-(imidazol-4-yl)glycerol 3-phosphate + 5-amino-1-(5-phospho-beta-D-ribosyl)imidazole-4-carboxamide + L-glutamate + H(+). It participates in amino-acid biosynthesis; L-histidine biosynthesis; L-histidine from 5-phospho-alpha-D-ribose 1-diphosphate: step 5/9. IGPS catalyzes the conversion of PRFAR and glutamine to IGP, AICAR and glutamate. The HisF subunit catalyzes the cyclization activity that produces IGP and AICAR from PRFAR using the ammonia provided by the HisH subunit. The chain is Imidazole glycerol phosphate synthase subunit HisF from Chlorobium chlorochromatii (strain CaD3).